Here is a 421-residue protein sequence, read N- to C-terminus: Osmoprotective compounds-binding protein GgtB (421 aa).

Residues 1 to 18 (MKFFKITTLIISLIVLTS) form the signal peptide. A lipid anchor (N-palmitoyl cysteine) is attached at C19. C19 carries S-diacylglycerol cysteine lipidation.

Belongs to the bacterial solute-binding protein 1 family. As to quaternary structure, the complex is composed of two ATP-binding proteins (GgtA), two transmembrane proteins (GgtC and GgtD) and a solute-binding protein (GgtB).

It is found in the cell membrane. In terms of biological role, part of the ABC transporter complex GgtABCD involved in the uptake of the osmoprotective compounds glucosylglycerol (GG), sucrose and trehalose. Binds glucosylglycerol and exhibits a somewhat lower affinity towards sucrose and a substantially lower affinity towards trehalose. The chain is Osmoprotective compounds-binding protein GgtB from Synechocystis sp. (strain ATCC 27184 / PCC 6803 / Kazusa).